A 740-amino-acid polypeptide reads, in one-letter code: Elongation factor 2 (740 aa).

The 242-residue stretch at 23–264 (AQIRNAGTLA…MIIEHVPPPN (242 aa)) folds into the tr-type G domain. GTP contacts are provided by residues 32–39 (AHVDHGKT), 98–102 (DTPGH), and 152–155 (NKID). Histidine 605 is modified (diphthamide).

Belongs to the TRAFAC class translation factor GTPase superfamily. Classic translation factor GTPase family. EF-G/EF-2 subfamily.

The protein resides in the cytoplasm. Its function is as follows. Catalyzes the GTP-dependent ribosomal translocation step during translation elongation. During this step, the ribosome changes from the pre-translocational (PRE) to the post-translocational (POST) state as the newly formed A-site-bound peptidyl-tRNA and P-site-bound deacylated tRNA move to the P and E sites, respectively. Catalyzes the coordinated movement of the two tRNA molecules, the mRNA and conformational changes in the ribosome. This Pyrobaculum arsenaticum (strain DSM 13514 / JCM 11321 / PZ6) protein is Elongation factor 2.